We begin with the raw amino-acid sequence, 1605 residues long: Pentafunctional AROM polypeptide (1605 aa).

The interval 1–384 (MTGPTKISIL…YEPRASVVPN (384 aa)) is 3-dehydroquinate synthase. NAD(+)-binding positions include 44–46 (DTN), 81–84 (EVSK), 114–116 (GGV), and Asp-119. Arg-130 lines the 7-phospho-2-dehydro-3-deoxy-D-arabino-heptonate pocket. Residue 139 to 140 (TT) participates in NAD(+) binding. 2 residues coordinate 7-phospho-2-dehydro-3-deoxy-D-arabino-heptonate: Asp-146 and Lys-152. Lys-161 contacts NAD(+). Asn-162 contributes to the 7-phospho-2-dehydro-3-deoxy-D-arabino-heptonate binding site. NAD(+)-binding positions include 179–182 (FLET) and Asn-190. Glu-194 contacts Zn(2+). 7-phospho-2-dehydro-3-deoxy-D-arabino-heptonate is bound by residues 194 to 197 (EVIK) and Lys-250. Glu-260 (proton acceptor; for 3-dehydroquinate synthase activity) is an active-site residue. Residues 264-268 (RNLLN) and His-271 each bind 7-phospho-2-dehydro-3-deoxy-D-arabino-heptonate. Position 271 (His-271) interacts with Zn(2+). His-275 (proton acceptor; for 3-dehydroquinate synthase activity) is an active-site residue. 2 residues coordinate 7-phospho-2-dehydro-3-deoxy-D-arabino-heptonate: His-287 and Lys-356. His-287 lines the Zn(2+) pocket. Positions 397-842 (VHPGVSTTSE…WDTLRQKFAV (446 aa)) are EPSP synthase. Cys-824 serves as the catalytic For EPSP synthase activity. Positions 864-1055 (SASVFIIGMR…KKKQHSFFVS (192 aa)) are shikimate kinase. 871–878 (GMRGAGKT) is a binding site for ATP. The tract at residues 1056–1276 (LTLPDVRGAD…AAPGQLSATD (221 aa)) is 3-dehydroquinase. The active-site Proton acceptor; for 3-dehydroquinate dehydratase activity is the His-1179. Lys-1207 functions as the Schiff-base intermediate with substrate; for 3-dehydroquinate dehydratase activity in the catalytic mechanism. The segment at 1289-1605 (KKRFALFGSP…LSGRTMLTCS (317 aa)) is shikimate dehydrogenase.

It in the N-terminal section; belongs to the sugar phosphate cyclases superfamily. Dehydroquinate synthase family. This sequence in the 2nd section; belongs to the EPSP synthase family. The protein in the 3rd section; belongs to the shikimate kinase family. In the 4th section; belongs to the type-I 3-dehydroquinase family. It in the C-terminal section; belongs to the shikimate dehydrogenase family. As to quaternary structure, homodimer. Zn(2+) serves as cofactor.

The protein localises to the cytoplasm. The enzyme catalyses 7-phospho-2-dehydro-3-deoxy-D-arabino-heptonate = 3-dehydroquinate + phosphate. It carries out the reaction 3-dehydroquinate = 3-dehydroshikimate + H2O. It catalyses the reaction shikimate + NADP(+) = 3-dehydroshikimate + NADPH + H(+). The catalysed reaction is shikimate + ATP = 3-phosphoshikimate + ADP + H(+). The enzyme catalyses 3-phosphoshikimate + phosphoenolpyruvate = 5-O-(1-carboxyvinyl)-3-phosphoshikimate + phosphate. It participates in metabolic intermediate biosynthesis; chorismate biosynthesis; chorismate from D-erythrose 4-phosphate and phosphoenolpyruvate: step 2/7. Its pathway is metabolic intermediate biosynthesis; chorismate biosynthesis; chorismate from D-erythrose 4-phosphate and phosphoenolpyruvate: step 3/7. The protein operates within metabolic intermediate biosynthesis; chorismate biosynthesis; chorismate from D-erythrose 4-phosphate and phosphoenolpyruvate: step 4/7. It functions in the pathway metabolic intermediate biosynthesis; chorismate biosynthesis; chorismate from D-erythrose 4-phosphate and phosphoenolpyruvate: step 5/7. It participates in metabolic intermediate biosynthesis; chorismate biosynthesis; chorismate from D-erythrose 4-phosphate and phosphoenolpyruvate: step 6/7. In terms of biological role, the AROM polypeptide catalyzes 5 consecutive enzymatic reactions in prechorismate polyaromatic amino acid biosynthesis. The chain is Pentafunctional AROM polypeptide from Aspergillus fumigatus (strain CBS 144.89 / FGSC A1163 / CEA10) (Neosartorya fumigata).